The following is a 726-amino-acid chain: MSTATTVAPAGIPATPGPVNPPPPEVSNPSKPGRKTNQLQYMQNVVVKTLWKHQFAWPFYQPVDAIKLNLPDYHKIIKNPMDMGTIKKRLENNYYWSASECMQDFNTMFTNCYIYNKPTDDIVLMAQALEKIFLQKVAQMPQEEVELLPPAPKGKGRKPAAGAQSAGTQQVAAVSSVSPATPFQSVPPTVSQTPVIAATPVPTITANVTSVPVPPAAAPPPPATPIVPVVPPTPPVVKKKGVKRKADTTTPTTSAITASRSESPPPLSDPKQAKVVARRESGGRPIKPPKKDLEDGEVPQHAGKKGKLSEHLRYCDSILREMLSKKHAAYAWPFYKPVDAEALELHDYHDIIKHPMDLSTVKRKMDGREYPDAQGFAADVRLMFSNCYKYNPPDHEVVAMARKLQDVFEMRFAKMPDEPVEAPALPAPAAPMVSKGAESSRSSEESSSDSGSSDSEEERATRLAELQEQLKAVHEQLAALSQAPVNKPKKKKEKKEKEKKKKDKEKEKEKHKVKAEEEKKAKVAPPAKQAQQKKAPAKKANSTTTAGRQLKKGGKQASASYDSEEEEEGLPMSYDEKRQLSLDINRLPGEKLGRVVHIIQSREPSLRDSNPDEIEIDFETLKPTTLRELERYVKSCLQKKQRKPFSASGKKQAAKSKEELAQEKKKELEKRLQDVSGQLSSSKKPARKEKPGSAPSGGPSRLSSSSSSESGSSSSSGSSSDSSDSE.

The segment at 1 to 35 (MSTATTVAPAGIPATPGPVNPPPPEVSNPSKPGRK) is disordered. N-acetylserine is present on S2. A compositionally biased stretch (pro residues) spans 15 to 26 (TPGPVNPPPPEV). The Bromo 1 domain maps to 34–140 (RKTNQLQYMQ…KIFLQKVAQM (107 aa)). The interval 78-80 (KNP) is acetylated histone H3 binding. Disordered regions lie at residues 149-169 (PPAPKGKGRKPAAGAQSAGTQ) and 237-305 (VKKK…AGKK). The span at 248-261 (TTTPTTSAITASRS) shows a compositional bias: low complexity. Residues S263 and S281 each carry the phosphoserine modification. The region spanning 306 to 415 (GKLSEHLRYC…DVFEMRFAKM (110 aa)) is the Bromo 2 domain. Residue K414 forms a Glycyl lysine isopeptide (Lys-Gly) (interchain with G-Cter in SUMO2) linkage. Disordered regions lie at residues 421–462 (EAPA…RATR), 477–575 (LAAL…MSYD), and 637–726 (LQKK…SDSE). Residues 453-524 (SDSEEERATR…AEEEKKAKVA (72 aa)) adopt a coiled-coil conformation. Over residues 487 to 503 (KPKKKKEKKEKEKKKKD) the composition is skewed to basic residues. Basic and acidic residues predominate over residues 504 to 521 (KEKEKEKHKVKAEEEKKA). Positions 523–540 (VAPPAKQAQQKKAPAKKA) are enriched in low complexity. The region spanning 562 to 644 (DSEEEEEGLP…SCLQKKQRKP (83 aa)) is the NET domain. S563 is modified (phosphoserine). Residues 645 to 684 (FSASGKKQAAKSKEELAQEKKKELEKRLQDVSGQLSSSKK) adopt a coiled-coil conformation. Over residues 655-673 (KSKEELAQEKKKELEKRLQ) the composition is skewed to basic and acidic residues. Over residues 692-726 (GSAPSGGPSRLSSSSSSESGSSSSSGSSSDSSDSE) the composition is skewed to low complexity.

It belongs to the BET family. Interacts (via bromo domain 1) with GATA1 acetylated at 'Lys-312' and 'Lys-315'. Interacts (via bromo domain 1) with GATA2 acetylated on lysine residues. Interacts (via NET domain) with CHD4 (via KIKL motif). Interacts (via NET domain) with SMARCA4 (via KIKL motif). Interacts (via NET domain) with NSD3 (via KIKL motif). As to quaternary structure, (Microbial infection) Interacts with the Integrase protein of Moloney murine leukemia virus (MLV). Ubiquitous.

It is found in the nucleus. Its subcellular location is the chromosome. Inhibited by JQ1, a thieno-triazolo-1,4-diazepine derivative, which specifically inhibits members of the BET family (BRD2, BRD3 and BRD4). The first bromo domain is inhibited by GSK778 (iBET-BD1), which specifically inhibits the first bromo domain of members of the BET family (BRD2, BRD3 and BRD4). The second bromo domain is inhibited by ABBV-744, which specifically inhibits the second bromo domain of members of the BET family (BRD2, BRD3 and BRD4). The second bromo domain is inhibited by GSK046 (iBET-BD2), which specifically inhibits the second bromo domain of members of the BET family (BRD2, BRD3 and BRD4). Functionally, chromatin reader that recognizes and binds acetylated histones, thereby controlling gene expression and remodeling chromatin structures. Recruits transcription factors and coactivators to target gene sites, and activates RNA polymerase II machinery for transcriptional elongation. In vitro, binds acetylated lysine residues on the N-terminus of histone H2A, H2B, H3 and H4. Involved in endoderm differentiation via its association with long non-coding RNA (lncRNA) DIGIT: BRD3 undergoes liquid-liquid phase separation upon binding to lncRNA DIGIT, promoting binding to histone H3 acetylated at 'Lys-18' (H3K18ac) to induce endoderm gene expression. Also binds non-histones acetylated proteins, such as GATA1 and GATA2: regulates transcription by promoting the binding of the transcription factor GATA1 to its targets. The chain is Bromodomain-containing protein 3 from Homo sapiens (Human).